The chain runs to 816 residues: uncharacterized protein (816 aa).

Disordered regions lie at residues 1-34 (MLFNINRQEDDPFTQLINQSSANTQNQQAHQQES), 65-101 (RQNNRAYGEDAKNRKFPTVSATSAYSKQQPKDLGYKN), 154-406 (DEKD…ENPE), and 770-816 (RQHK…VMYA). Positions 18 to 32 (NQSSANTQNQQAHQQ) are enriched in low complexity. Positions 83–92 (VSATSAYSKQ) are enriched in polar residues. Residues 161-223 (TTTSSSTSTS…STSTTSTSTT (63 aa)) show a composition bias toward low complexity. The segment covering 246–260 (ESTSIGKGTADSAQI) has biased composition (polar residues). At serine 286 the chain carries Phosphoserine. The span at 292–316 (DEQKEEKSDVKKVNPPSGEEKKEVE) shows a compositional bias: basic and acidic residues. Positions 317 to 326 (AEGDAEEETE) are enriched in acidic residues. A compositionally biased stretch (low complexity) spans 327–342 (QSSAEESAERTSTPET). Phosphoserine occurs at positions 343 and 347. Acidic residues predominate over residues 343 to 353 (SEPESEEDESP). The segment covering 380–396 (KSPTSSSTQKSKTAAPS) has biased composition (low complexity). Composition is skewed to basic and acidic residues over residues 770 to 792 (RQHKQAEGIHAAENHKIPNDRSQ) and 799 to 816 (PKDDSLYEYHTEEDVMYA). Residue threonine 809 is modified to Phosphothreonine.

Post-translationally, pyrophosphorylated by 5-diphosphoinositol pentakisphosphate (5-IP7). Serine pyrophosphorylation is achieved by Mg(2+)-dependent, but enzyme independent transfer of a beta-phosphate from a inositol pyrophosphate to a pre-phosphorylated serine residue.

This is an uncharacterized protein from Saccharomyces cerevisiae (strain ATCC 204508 / S288c) (Baker's yeast).